A 668-amino-acid chain; its full sequence is Packaging protein UL32 homolog (668 aa).

Residues 1-10 (MNPSTHVSSN) show a composition bias toward polar residues. The tract at residues 1-35 (MNPSTHVSSNGPTTPPHGPHTTFLPPTSPAPSTSS) is disordered. Residues 19-35 (PHTTFLPPTSPAPSTSS) show a composition bias toward low complexity. Cys200, Cys203, His276, and Cys282 together coordinate Zn(2+). The zinc finger 1 stretch occupies residues 200–282 (CNLCAIISIC…FHLHFFINRC (83 aa)). 2 stretches are compositionally biased toward basic and acidic residues: residues 392-401 (SEREDARMMM) and 410-419 (GEKGGDDPGR). The tract at residues 392-430 (SEREDARMMMEEEEDEEGGEKGGDDPGRHNGGGTSGGFS) is disordered. Residues Cys459, Cys462, His567, and Cys574 each coordinate Zn(2+). Residues 459–574 (CLLCELMACS…YKHFFCDPQC (116 aa)) form a zinc finger 2 region.

Belongs to the herpesviridae UL32 protein family.

It localises to the host cytoplasm. The protein localises to the host nucleus. Plays a role in efficient localization of neo-synthesized capsids to nuclear replication compartments, thereby controlling cleavage and packaging of virus genomic DNA. The chain is Packaging protein UL32 homolog (UL52) from Homo sapiens (Human).